The sequence spans 205 residues: Ribosomal RNA small subunit methyltransferase G (205 aa).

S-adenosyl-L-methionine contacts are provided by residues glycine 70, leucine 75, isoleucine 121–glutamate 122, and arginine 136.

Belongs to the methyltransferase superfamily. RNA methyltransferase RsmG family.

It is found in the cytoplasm. It catalyses the reaction guanosine(527) in 16S rRNA + S-adenosyl-L-methionine = N(7)-methylguanosine(527) in 16S rRNA + S-adenosyl-L-homocysteine. Specifically methylates the N7 position of guanine in position 527 of 16S rRNA. The sequence is that of Ribosomal RNA small subunit methyltransferase G from Methylococcus capsulatus (strain ATCC 33009 / NCIMB 11132 / Bath).